Consider the following 589-residue polypeptide: Aspartate--tRNA(Asp/Asn) ligase (589 aa).

Residue glutamate 172 coordinates L-aspartate. The interval 196-199 (QLFK) is aspartate. An L-aspartate-binding site is contributed by arginine 218. Residues 218–220 (RDE) and glutamine 227 contribute to the ATP site. L-aspartate is bound at residue histidine 449. Glutamate 483 contributes to the ATP binding site. Arginine 490 provides a ligand contact to L-aspartate. 535–538 (GVDR) contacts ATP.

The protein belongs to the class-II aminoacyl-tRNA synthetase family. Type 1 subfamily. As to quaternary structure, homodimer.

The protein localises to the cytoplasm. The catalysed reaction is tRNA(Asx) + L-aspartate + ATP = L-aspartyl-tRNA(Asx) + AMP + diphosphate. Functionally, aspartyl-tRNA synthetase with relaxed tRNA specificity since it is able to aspartylate not only its cognate tRNA(Asp) but also tRNA(Asn). Reaction proceeds in two steps: L-aspartate is first activated by ATP to form Asp-AMP and then transferred to the acceptor end of tRNA(Asp/Asn). The sequence is that of Aspartate--tRNA(Asp/Asn) ligase from Francisella philomiragia subsp. philomiragia (strain ATCC 25017 / CCUG 19701 / FSC 153 / O#319-036).